We begin with the raw amino-acid sequence, 292 residues long: Elongation factor Ts (292 aa).

An involved in Mg(2+) ion dislocation from EF-Tu region spans residues 79-82; the sequence is TDFV.

The protein belongs to the EF-Ts family.

It is found in the cytoplasm. Its function is as follows. Associates with the EF-Tu.GDP complex and induces the exchange of GDP to GTP. It remains bound to the aminoacyl-tRNA.EF-Tu.GTP complex up to the GTP hydrolysis stage on the ribosome. This chain is Elongation factor Ts, found in Xanthomonas oryzae pv. oryzae (strain MAFF 311018).